Consider the following 788-residue polypeptide: DNA ligase (788 aa).

Residues 35 to 39 (DAEYD), 84 to 85 (SL), and Glu-124 contribute to the NAD(+) site. The active-site N6-AMP-lysine intermediate is the Lys-126. NAD(+) contacts are provided by Arg-147, Glu-184, Lys-300, and Lys-324. Residues Cys-418, Cys-421, Cys-448, and Cys-454 each contribute to the Zn(2+) site. A BRCT domain is found at 707–788 (AEGLPLAGQT…FIERLAQLGS (82 aa)).

It belongs to the NAD-dependent DNA ligase family. LigA subfamily. The cofactor is Mg(2+). Mn(2+) is required as a cofactor.

The catalysed reaction is NAD(+) + (deoxyribonucleotide)n-3'-hydroxyl + 5'-phospho-(deoxyribonucleotide)m = (deoxyribonucleotide)n+m + AMP + beta-nicotinamide D-nucleotide.. Functionally, DNA ligase that catalyzes the formation of phosphodiester linkages between 5'-phosphoryl and 3'-hydroxyl groups in double-stranded DNA using NAD as a coenzyme and as the energy source for the reaction. It is essential for DNA replication and repair of damaged DNA. The chain is DNA ligase from Stutzerimonas stutzeri (strain A1501) (Pseudomonas stutzeri).